The sequence spans 78 residues: Large ribosomal subunit protein bL28 (78 aa).

A disordered region spans residues 1-21 (MSRVCQVTGKSPITGNNVSHA). Residues 8–21 (TGKSPITGNNVSHA) show a composition bias toward polar residues.

The protein belongs to the bacterial ribosomal protein bL28 family.

This chain is Large ribosomal subunit protein bL28, found in Hahella chejuensis (strain KCTC 2396).